We begin with the raw amino-acid sequence, 831 residues long: Zinc transporter ZIP10 (831 aa).

The signal sequence occupies residues 1–25; sequence MKVHMHTKFCLICLLTFIFHHCNHC. The tract at residues 126–318 is disordered; the sequence is HNHQHSHNHL…RKREAPHVKN (193 aa). A compositionally biased stretch (polar residues) spans 138 to 147; the sequence is ENQTVTSVST. A glycan (N-linked (GlcNAc...) asparagine) is linked at asparagine 139. Residues 152 to 171 are compositionally biased toward basic and acidic residues; that stretch reads KCDPEKETVEVSVKSDDKHM. Positions 172–188 are enriched in basic residues; sequence HDHNHRLRHHHRLHHHL. The span at 189 to 198 shows a compositional bias: basic and acidic residues; it reads DHNNTHHFHN. N-linked (GlcNAc...) asparagine glycans are attached at residues asparagine 198 and asparagine 218. The segment covering 211–221 has biased composition (polar residues); it reads NEPSTETNKTQ. The span at 229–238 shows a compositional bias: basic residues; sequence PKGKRKKKGR. 2 stretches are compositionally biased toward basic and acidic residues: residues 256 to 273 and 281 to 315; these read DQGEQYEHNRVHKPDRVH and HLPERNGHDPGRGHQDLDPDNEGELRHTRKREAPH. N-linked (GlcNAc...) asparagine glycosylation occurs at asparagine 339. The next 2 helical transmembrane spans lie at 411-431 and 438-458; these read IISITVISLLSLLGVILVPII and FLLTFLVALAVGTMSGDALLH. Positions 464–484 are disordered; that stretch reads QGGHDHSHQHAHGHGHSHGHE. The helical transmembrane segment at 495–515 threads the bilayer; it reads VLKGLVALGGIYLLFIIEHCI. Residues threonine 536 and threonine 553 each carry the phosphothreonine modification. The residue at position 591 (serine 591) is a Phosphoserine. A run of 4 helical transmembrane segments spans residues 687–707, 732–752, 759–779, and 801–821; these read AIGAAFSAGLTGGISTSIAVF, IVYNLLSAMMAYIGMLIGTAV, ITLWIFAVTAGMFLYVALVDM, and FILQNLGLLFGFAIMLVIALY.

Belongs to the ZIP transporter (TC 2.A.5) family. In terms of assembly, interacts with SLC39A6; which triggers cells to undergo EMT and mitosis. Found in a complex with SLC39A6, SLC39A10 and with the 'Ser-727' phosphorylated form of STAT3 throughout mitosis. Found in a complex with SLC39A6, SLC39A10 and with NCAM1; this complex controls NCAM1 phosphorylation and integration into focal adhesion complexes during epithelial-tomesenchymal transition. Found in a complex with SLC39A6, SLC39A10 and with GSK3B that controls NCAM1 phosphorylation. Undergoes N-terminal ectodomain shedding.

It localises to the cell membrane. It is found in the apical cell membrane. The enzyme catalyses Zn(2+)(in) = Zn(2+)(out). Zinc-influx transporter. When associated with SLC39A6, the heterodimer formed by SLC39A10 and SLC39A6 mediates cellular zinc uptake to trigger cells to undergo epithelial-to-mesenchymal transition (EMT). SLC39A10-SLC39A6 heterodimers play also an essentiel role in initiating mitosis by importing zinc into cells to initiate a pathway resulting in the onset of mitosis. Plays an important for both mature B-cell maintenance and humoral immune responses. When associated with SLC39A10, the heterodimer controls NCAM1 phosphorylation and integration into focal adhesion complexes during EMT. This Homo sapiens (Human) protein is Zinc transporter ZIP10.